We begin with the raw amino-acid sequence, 480 residues long: Ochratoxinase (480 aa).

Residues histidine 111, histidine 113, lysine 246, histidine 287, and histidine 307 each coordinate Zn(2+). Residue lysine 246 is part of the active site. The active site involves aspartate 378.

The protein belongs to the metallo-dependent hydrolases superfamily. Ochratoxinase amidase 2 family. As to quaternary structure, homooctamer. The cofactor is Zn(2+).

Its subcellular location is the secreted. The enzyme catalyses ochratoxin A + H2O = ochratoxin alpha + L-phenylalanine. Its activity is regulated as follows. The Zn(2+)-specific chelator 1,10-phenanthroline inhibits the enzyme activity. Its function is as follows. Carboxypeptidase that catalyzes the release of a C-terminal amino acid with specific catalytic activity for aromatic amino acids such as phenylalanine. Is able to degrade ochratoxin A, one of the five major mycotoxins most harmful to humans and animals that is produced by Aspergillus and Penicillium species and occurs in a wide range of agricultural products. The chain is Ochratoxinase from Aspergillus niger (strain ATCC MYA-4892 / CBS 513.88 / FGSC A1513).